Consider the following 264-residue polypeptide: 3-methyl-2-oxobutanoate hydroxymethyltransferase (264 aa).

The Mg(2+) site is built by Asp-45 and Asp-84. 3-methyl-2-oxobutanoate is bound by residues 45-46 (DS), Asp-84, and Lys-112. Glu-114 lines the Mg(2+) pocket. Glu-181 acts as the Proton acceptor in catalysis.

This sequence belongs to the PanB family. As to quaternary structure, homodecamer; pentamer of dimers. Mg(2+) is required as a cofactor.

It is found in the cytoplasm. The enzyme catalyses 3-methyl-2-oxobutanoate + (6R)-5,10-methylene-5,6,7,8-tetrahydrofolate + H2O = 2-dehydropantoate + (6S)-5,6,7,8-tetrahydrofolate. It functions in the pathway cofactor biosynthesis; (R)-pantothenate biosynthesis; (R)-pantoate from 3-methyl-2-oxobutanoate: step 1/2. Its function is as follows. Catalyzes the reversible reaction in which hydroxymethyl group from 5,10-methylenetetrahydrofolate is transferred onto alpha-ketoisovalerate to form ketopantoate. This Vibrio atlanticus (strain LGP32) (Vibrio splendidus (strain Mel32)) protein is 3-methyl-2-oxobutanoate hydroxymethyltransferase.